A 119-amino-acid polypeptide reads, in one-letter code: UPF0102 protein MS1289 (119 aa).

This sequence belongs to the UPF0102 family.

In Mannheimia succiniciproducens (strain KCTC 0769BP / MBEL55E), this protein is UPF0102 protein MS1289.